Consider the following 130-residue polypeptide: Small ribosomal subunit protein uS8 (130 aa).

The protein belongs to the universal ribosomal protein uS8 family. As to quaternary structure, part of the 30S ribosomal subunit. Contacts proteins S5 and S12.

In terms of biological role, one of the primary rRNA binding proteins, it binds directly to 16S rRNA central domain where it helps coordinate assembly of the platform of the 30S subunit. This chain is Small ribosomal subunit protein uS8, found in Shigella boydii serotype 18 (strain CDC 3083-94 / BS512).